The primary structure comprises 427 residues: Serine hydroxymethyltransferase (427 aa).

(6S)-5,6,7,8-tetrahydrofolate is bound by residues Leu-117 and Gly-121–Leu-123. Lys-226 carries the N6-(pyridoxal phosphate)lysine modification.

It belongs to the SHMT family. In terms of assembly, homodimer. The cofactor is pyridoxal 5'-phosphate.

It is found in the cytoplasm. It catalyses the reaction (6R)-5,10-methylene-5,6,7,8-tetrahydrofolate + glycine + H2O = (6S)-5,6,7,8-tetrahydrofolate + L-serine. It carries out the reaction L-threonine = acetaldehyde + glycine. The catalysed reaction is L-allo-threonine = acetaldehyde + glycine. It participates in one-carbon metabolism; tetrahydrofolate interconversion. Its pathway is amino-acid biosynthesis; glycine biosynthesis; glycine from L-serine: step 1/1. Its function is as follows. Its primary function is to catalyze the reversible interconversion of serine and glycine with tetrahydrofolate (THF) serving as the one-carbon carrier. This reaction serves as the major source of one-carbon groups required for the biosynthesis of purines, thymidylate, methionine, and other important biomolecules. Also exhibits THF-independent aldolase activity toward beta-hydroxyamino acids, producing glycine and aldehydes, via a retro-aldol mechanism. Thus, is able to catalyze the cleavage of L-threonine, L-allo-threonine, L-threo-beta-phenylserine and L-erythro-beta-phenylserine. This second activity is likely to be physiological in H.thermophilus, which is an organism that lacks the ortholog gene for the 'real' threonine aldolase characterized in mesophilic bacteria (LtaE), yeast and plants. This is Serine hydroxymethyltransferase from Hydrogenobacter thermophilus (strain DSM 6534 / IAM 12695 / TK-6).